The following is a 429-amino-acid chain: Gamma-glutamyl phosphate reductase (429 aa).

Belongs to the gamma-glutamyl phosphate reductase family.

It localises to the cytoplasm. It carries out the reaction L-glutamate 5-semialdehyde + phosphate + NADP(+) = L-glutamyl 5-phosphate + NADPH + H(+). It participates in amino-acid biosynthesis; L-proline biosynthesis; L-glutamate 5-semialdehyde from L-glutamate: step 2/2. In terms of biological role, catalyzes the NADPH-dependent reduction of L-glutamate 5-phosphate into L-glutamate 5-semialdehyde and phosphate. The product spontaneously undergoes cyclization to form 1-pyrroline-5-carboxylate. The polypeptide is Gamma-glutamyl phosphate reductase (Nocardioides sp. (strain ATCC BAA-499 / JS614)).